A 76-amino-acid chain; its full sequence is ATP synthase subunit 9, mitochondrial (76 aa).

The next 2 membrane-spanning stretches (helical) occupy residues 14 to 34 (ISTI…AALI) and 56 to 76 (ALSE…LFAV).

This sequence belongs to the ATPase C chain family. In terms of assembly, F-type ATPases have 2 components, CF(1) - the catalytic core - and CF(0) - the membrane proton channel. CF(1) has five subunits: alpha(3), beta(3), gamma(1), delta(1), epsilon(1). CF(0) has three main subunits: a, b and c.

The protein localises to the mitochondrion membrane. Functionally, mitochondrial membrane ATP synthase (F(1)F(0) ATP synthase or Complex V) produces ATP from ADP in the presence of a proton gradient across the membrane which is generated by electron transport complexes of the respiratory chain. F-type ATPases consist of two structural domains, F(1) - containing the extramembraneous catalytic core and F(0) - containing the membrane proton channel, linked together by a central stalk and a peripheral stalk. During catalysis, ATP synthesis in the catalytic domain of F(1) is coupled via a rotary mechanism of the central stalk subunits to proton translocation. Part of the complex F(0) domain. A homomeric c-ring of probably 10 subunits is part of the complex rotary element. The chain is ATP synthase subunit 9, mitochondrial (ATP9) from Candida glabrata (strain ATCC 2001 / BCRC 20586 / JCM 3761 / NBRC 0622 / NRRL Y-65 / CBS 138) (Yeast).